The primary structure comprises 288 residues: Nucleotide-binding protein Gura_2968 (288 aa).

8-15 (GLSGSGKS) is a binding site for ATP. GTP is bound at residue 59–62 (DIRG).

The protein belongs to the RapZ-like family.

Its function is as follows. Displays ATPase and GTPase activities. The chain is Nucleotide-binding protein Gura_2968 from Geotalea uraniireducens (strain Rf4) (Geobacter uraniireducens).